Consider the following 379-residue polypeptide: Succinyl-diaminopimelate desuccinylase (379 aa).

His-68 contacts Zn(2+). Residue Asp-70 is part of the active site. Asp-101 provides a ligand contact to Zn(2+). Glu-135 (proton acceptor) is an active-site residue. 3 residues coordinate Zn(2+): Glu-136, Glu-164, and His-350.

It belongs to the peptidase M20A family. DapE subfamily. Homodimer. Zn(2+) is required as a cofactor. The cofactor is Co(2+).

The catalysed reaction is N-succinyl-(2S,6S)-2,6-diaminopimelate + H2O = (2S,6S)-2,6-diaminopimelate + succinate. Its pathway is amino-acid biosynthesis; L-lysine biosynthesis via DAP pathway; LL-2,6-diaminopimelate from (S)-tetrahydrodipicolinate (succinylase route): step 3/3. Functionally, catalyzes the hydrolysis of N-succinyl-L,L-diaminopimelic acid (SDAP), forming succinate and LL-2,6-diaminopimelate (DAP), an intermediate involved in the bacterial biosynthesis of lysine and meso-diaminopimelic acid, an essential component of bacterial cell walls. This chain is Succinyl-diaminopimelate desuccinylase, found in Bordetella pertussis (strain Tohama I / ATCC BAA-589 / NCTC 13251).